We begin with the raw amino-acid sequence, 60 residues long: Large ribosomal subunit protein bL32 (60 aa).

A disordered region spans residues 1–28 (MAVQQNKKSRSKRDMRRSHDALTGPTLS). A compositionally biased stretch (basic residues) spans 7–16 (KKSRSKRDMR).

The protein belongs to the bacterial ribosomal protein bL32 family.

The polypeptide is Large ribosomal subunit protein bL32 (Cellvibrio japonicus (strain Ueda107) (Pseudomonas fluorescens subsp. cellulosa)).